The following is a 367-amino-acid chain: Forkhead box protein I2-B (367 aa).

Positions 31 to 40 (QQQNQQLPQR) are enriched in low complexity. A disordered region spans residues 31–51 (QQQNQQLPQRPAAPPAPGYGL). The fork-head DNA-binding region spans 124-218 (RPPYSYSSLI…DNGNFRRKRK (95 aa)). A disordered region spans residues 224–254 (VGAGFDEESNEDKKPLALKSLGPDSPGGASV).

It localises to the nucleus. Possible transcriptional activator. In Xenopus laevis (African clawed frog), this protein is Forkhead box protein I2-B (foxi2-b).